The primary structure comprises 371 residues: Probable beta-1,3-galactosyltransferase 12 (371 aa).

The tract at residues 1–36 (MPLFSHRFTTASSSSPASPSYYNKPSSKTHKPNSSS) is disordered. Residues 11-36 (ASSSSPASPSYYNKPSSKTHKPNSSS) are compositionally biased toward low complexity. The chain crosses the membrane as a helical; Signal-anchor for type II membrane protein span at residues 46 to 66 (VAIIFFSLVSVFIGVAGTIFA). N291 carries N-linked (GlcNAc...) asparagine glycosylation.

This sequence belongs to the glycosyltransferase 31 family. It depends on Mn(2+) as a cofactor.

The protein resides in the golgi apparatus membrane. Its pathway is protein modification; protein glycosylation. Its function is as follows. Beta-1,3-galactosyltransferase that transfers galactose from UDP-galactose to substrates with a terminal glycosyl residue. The chain is Probable beta-1,3-galactosyltransferase 12 (B3GALT12) from Arabidopsis thaliana (Mouse-ear cress).